A 361-amino-acid chain; its full sequence is Phospho-N-acetylmuramoyl-pentapeptide-transferase (361 aa).

10 consecutive transmembrane segments (helical) span residues 28–48, 74–94, 99–119, 133–153, 168–188, 203–223, 236–256, 263–283, 288–308, and 338–358; these read LAIIITLSLSFVTGPILIKFL, TMGGIMIILSSCLATLLLADL, IWITLFGFISFGIIGFMDDYA, SKLLLQGIISLIICILLEYTD, LSLDLGYFYIVFAIFVIVGSS, VPIAFTAGSFALISYLVGNLI, TGELTVLCAGLVGSCLGFLWF, VFMGDTGSLSLGSILGIISVI, VVLSIVGGLFVVETTSVILQV, and KVVIRFWIISVIFALIGLSSL.

It belongs to the glycosyltransferase 4 family. MraY subfamily. Mg(2+) serves as cofactor.

The protein resides in the cell inner membrane. The enzyme catalyses UDP-N-acetyl-alpha-D-muramoyl-L-alanyl-gamma-D-glutamyl-meso-2,6-diaminopimeloyl-D-alanyl-D-alanine + di-trans,octa-cis-undecaprenyl phosphate = di-trans,octa-cis-undecaprenyl diphospho-N-acetyl-alpha-D-muramoyl-L-alanyl-D-glutamyl-meso-2,6-diaminopimeloyl-D-alanyl-D-alanine + UMP. It participates in cell wall biogenesis; peptidoglycan biosynthesis. Functionally, catalyzes the initial step of the lipid cycle reactions in the biosynthesis of the cell wall peptidoglycan: transfers peptidoglycan precursor phospho-MurNAc-pentapeptide from UDP-MurNAc-pentapeptide onto the lipid carrier undecaprenyl phosphate, yielding undecaprenyl-pyrophosphoryl-MurNAc-pentapeptide, known as lipid I. The protein is Phospho-N-acetylmuramoyl-pentapeptide-transferase of Rickettsia canadensis (strain McKiel).